The sequence spans 632 residues: Cytosolic Fe-S cluster assembly factor NAR1 (632 aa).

Cys20 lines the [4Fe-4S] cluster pocket. Residues 27–53 (LPAKPEDSSNPYEVTTEDKAAASQPPP) form a disordered region. [4Fe-4S] cluster contacts are provided by Cys62, Cys65, and Cys68. Disordered regions lie at residues 99-119 (WQTQ…NGHS) and 210-231 (LSPE…DTTP). The segment covering 101 to 119 (TQNGTNGTNGTNGTTNGHS) has biased composition (low complexity). Over residues 211–221 (SPETSNPSTKP) the composition is skewed to polar residues. Cys240, Cys295, Cys486, and Cys490 together coordinate [4Fe-4S] cluster. The disordered stretch occupies residues 542 to 573 (GSDSEEEKVDQDGDQNMQDATTNGHTSEPDIV). The segment covering 544-554 (DSEEEKVDQDG) has biased composition (acidic residues). Positions 555-567 (DQNMQDATTNGHT) are enriched in polar residues.

It belongs to the NARF family.

Component of the cytosolic Fe/S protein assembly machinery. Required for maturation of extramitochondrial Fe/S proteins. May play a role in the transfer of pre-assembled Fe/S clusters to target apoproteins. This chain is Cytosolic Fe-S cluster assembly factor NAR1 (NAR1), found in Phaeosphaeria nodorum (strain SN15 / ATCC MYA-4574 / FGSC 10173) (Glume blotch fungus).